The primary structure comprises 199 residues: Probable molybdenum cofactor guanylyltransferase (199 aa).

GTP contacts are provided by residues 6-8 (LAG), lysine 18, aspartate 65, and aspartate 97. Aspartate 97 provides a ligand contact to Mg(2+).

This sequence belongs to the MobA family. Mg(2+) is required as a cofactor.

Its subcellular location is the cytoplasm. The enzyme catalyses Mo-molybdopterin + GTP + H(+) = Mo-molybdopterin guanine dinucleotide + diphosphate. Functionally, transfers a GMP moiety from GTP to Mo-molybdopterin (Mo-MPT) cofactor (Moco or molybdenum cofactor) to form Mo-molybdopterin guanine dinucleotide (Mo-MGD) cofactor. This is Probable molybdenum cofactor guanylyltransferase from Staphylococcus aureus (strain COL).